The sequence spans 445 residues: METIFAQSSAFGKAGVAVFRISGPKSLEVLQLLTGRKDFKPRLMYYQQIISPETNELIDNAMVVYFKLPNSFTGEDVVEIHTHGSKAISIMLINTLLNIDDIRLAEAGEFTKRAFLNNKFDLTAAEGIADLINAETIMQHRQAVRQANGGLEELYNNWRNQLLKIIALLEAYLDFPDEDIPDSILNDVNNTHKNIVNEISNYLNDNRRGELLNNGLKLAIIGPPNTGKSSLLNFLMQRNIAIVSNIAGTTRDIIEGHLDIGGYPIILQDTAGIRAESTDIIEREGIKRAINSAKTANIKIIMFDAEKLDLSINNDIIDLIDENTIVIINKIDLIEPSQIFPIEKKYKCLRVSVKNNIALSSILKNIENIAENIAGFTETPYITNQRHRHYLKQALSHLMAFNLDNDLVLATEDMRMTARCIGLITGVINVEEILNEIFKNFCIGK.

(6S)-5-formyl-5,6,7,8-tetrahydrofolate contacts are provided by arginine 20, glutamate 79, and lysine 119. The 157-residue stretch at 215–371 (GLKLAIIGPP…ILKNIENIAE (157 aa)) folds into the TrmE-type G domain. Asparagine 225 is a K(+) binding site. GTP is bound by residues 225-230 (NTGKSS), 244-250 (SNIAGTT), and 269-272 (DTAG). Serine 229 contacts Mg(2+). The K(+) site is built by serine 244, isoleucine 246, and threonine 249. Threonine 250 contacts Mg(2+). Residue lysine 445 coordinates (6S)-5-formyl-5,6,7,8-tetrahydrofolate.

The protein belongs to the TRAFAC class TrmE-Era-EngA-EngB-Septin-like GTPase superfamily. TrmE GTPase family. In terms of assembly, homodimer. Heterotetramer of two MnmE and two MnmG subunits. K(+) serves as cofactor.

Its subcellular location is the cytoplasm. Its function is as follows. Exhibits a very high intrinsic GTPase hydrolysis rate. Involved in the addition of a carboxymethylaminomethyl (cmnm) group at the wobble position (U34) of certain tRNAs, forming tRNA-cmnm(5)s(2)U34. The sequence is that of tRNA modification GTPase MnmE from Rickettsia typhi (strain ATCC VR-144 / Wilmington).